A 142-amino-acid chain; its full sequence is Large ribosomal subunit protein uL11 (142 aa).

The protein belongs to the universal ribosomal protein uL11 family. Part of the ribosomal stalk of the 50S ribosomal subunit. Interacts with L10 and the large rRNA to form the base of the stalk. L10 forms an elongated spine to which L12 dimers bind in a sequential fashion forming a multimeric L10(L12)X complex. One or more lysine residues are methylated.

Its function is as follows. Forms part of the ribosomal stalk which helps the ribosome interact with GTP-bound translation factors. The polypeptide is Large ribosomal subunit protein uL11 (Rhodopseudomonas palustris (strain BisB5)).